Consider the following 269-residue polypeptide: UPF0162 protein BUsg_167 (269 aa).

The protein belongs to the UPF0162 family.

The polypeptide is UPF0162 protein BUsg_167 (Buchnera aphidicola subsp. Schizaphis graminum (strain Sg)).